A 496-amino-acid polypeptide reads, in one-letter code: Genome polyprotein (496 aa).

The Extracellular portion of the chain corresponds to 1–447; the sequence is SRCTHLENRD…HTVLGGAFNS (447 aa). 6 disulfide bridges follow: C3-C30, C60-C116, C60-C121, C74-C105, C92-C116, and C92-C121. Residues 98-111 are fusion peptide; it reads DRGWGNHCGLFGKG. An N-linked (GlcNAc...) asparagine; by host glycan is attached at N154. Disulfide bonds link C186-C290 and C307-C338. Residues 448–468 traverse the membrane as a helical segment; that stretch reads IFGGVGFLPKLLMGVALAWLG. Over 469 to 479 the chain is Cytoplasmic; that stretch reads LNTRNPTMSMS. A helical membrane pass occupies residues 480–496; that stretch reads FLMAGGLVLAMTLGVGA.

As to quaternary structure, homodimer; in the endoplasmic reticulum and Golgi. In terms of processing, N-glycosylated.

It is found in the virion membrane. Its subcellular location is the host endoplasmic reticulum membrane. In terms of biological role, binds to host cell surface receptor and mediates fusion between viral and cellular membranes. Envelope protein is synthesized in the endoplasmic reticulum in the form of heterodimer with protein prM. They play a role in virion budding in the ER, and the newly formed immature particle is covered with 60 spikes composed of heterodimer between precursor prM and envelope protein E. The virion is transported to the Golgi apparatus where the low pH causes dissociation of PrM-E heterodimers and formation of E homodimers. prM-E cleavage is ineficient, and many virions are only partially matured. These uncleaved prM would play a role in immune evasion. The protein is Genome polyprotein of Bos taurus (Bovine).